A 273-amino-acid chain; its full sequence is Soluble P-type ATPase-like phosphatase (273 aa).

Catalysis depends on aspartate 8, which acts as the 4-aspartylphosphate intermediate.

This sequence belongs to the cation transport ATPase (P-type) (TC 3.A.3) family. Type IB subfamily. It depends on Mg(2+) as a cofactor.

Inhibited by orthovanadate. Most probably acts as a phosphatase in the cytosol. This chain is Soluble P-type ATPase-like phosphatase (patS), found in Methanocaldococcus jannaschii (strain ATCC 43067 / DSM 2661 / JAL-1 / JCM 10045 / NBRC 100440) (Methanococcus jannaschii).